The following is a 634-amino-acid chain: Factor of DNA methylation 1 (634 aa).

Residues 288-469 adopt a coiled-coil conformation; sequence LDEKKNLHQA…LESMNSVLMT (182 aa). Residues 349–364 show a composition bias toward basic and acidic residues; sequence ELDRQKLDEDKRKSDA. Positions 349 to 375 are disordered; it reads ELDRQKLDEDKRKSDAMNKSLQLASRE.

In terms of assembly, homodimer. Interacts with IDN2 and AGO4. Forms a complex with IDN2 and FMD2/INDL2. In terms of tissue distribution, highly expressed in flowers and at lower levels in roots, leaves and stems.

Functionally, forms a complex with IDN2 and FDM2/IDNL2 that is required for RNA-directed DNA methylation (RdDM) and that functions at a downstream step of the RdDM pathway. Required for de novo DNA methylation and 24 nucleotide small interfering RNA (siRNA) accumulation. Binds unmethylated but not methylated DNAs through its coiled-coil domain. May bind double-stranded RNAs (dsRNAs) with 5'-overhangs through its XS domain. However, according to, FMD1 does not bind dsRNAs. This is Factor of DNA methylation 1 from Arabidopsis thaliana (Mouse-ear cress).